Reading from the N-terminus, the 152-residue chain is 3-dehydroquinate dehydratase (152 aa).

Residue Y23 is the Proton acceptor of the active site. Residues N75, H81, and D88 each coordinate substrate. H101 serves as the catalytic Proton donor. Substrate is bound by residues I102–S103 and R112.

This sequence belongs to the type-II 3-dehydroquinase family. In terms of assembly, homododecamer.

The enzyme catalyses 3-dehydroquinate = 3-dehydroshikimate + H2O. It functions in the pathway metabolic intermediate biosynthesis; chorismate biosynthesis; chorismate from D-erythrose 4-phosphate and phosphoenolpyruvate: step 3/7. Catalyzes a trans-dehydration via an enolate intermediate. The protein is 3-dehydroquinate dehydratase of Alkalilimnicola ehrlichii (strain ATCC BAA-1101 / DSM 17681 / MLHE-1).